Consider the following 338-residue polypeptide: 1-aminocyclopropane-1-carboxylate deaminase (338 aa).

Lysine 51 is modified (N6-(pyridoxal phosphate)lysine). The active-site Nucleophile is serine 78.

This sequence belongs to the ACC deaminase/D-cysteine desulfhydrase family. Pyridoxal 5'-phosphate serves as cofactor.

It catalyses the reaction 1-aminocyclopropane-1-carboxylate + H2O = 2-oxobutanoate + NH4(+). Its function is as follows. Catalyzes a cyclopropane ring-opening reaction, the irreversible conversion of 1-aminocyclopropane-1-carboxylate (ACC) to ammonia and alpha-ketobutyrate. Allows growth on ACC as a nitrogen source. The protein is 1-aminocyclopropane-1-carboxylate deaminase of Enterobacter cloacae.